We begin with the raw amino-acid sequence, 204 residues long: Small ribosomal subunit protein uS4 (204 aa).

Residues 1–49 (MSKRKSAKYKLDRRMGENIWGRPNSPVNKRSYGPGQHGQRRKGKTSDFG) are disordered. One can recognise an S4 RNA-binding domain in the interval 94–154 (QRLDMVVYRA…NKAKEMALVI (61 aa)).

It belongs to the universal ribosomal protein uS4 family. Part of the 30S ribosomal subunit. Contacts protein S5. The interaction surface between S4 and S5 is involved in control of translational fidelity.

One of the primary rRNA binding proteins, it binds directly to 16S rRNA where it nucleates assembly of the body of the 30S subunit. Functionally, with S5 and S12 plays an important role in translational accuracy. This chain is Small ribosomal subunit protein uS4, found in Erythrobacter litoralis (strain HTCC2594).